Reading from the N-terminus, the 515-residue chain is Pre-glycoprotein polyprotein GP complex (515 aa).

A lipid anchor (N-myristoyl glycine; by host) is attached at Gly-2. The Extracellular segment spans residues 2 to 17 (GQVIGFFQSLPEIINE). A helical membrane pass occupies residues 18–33 (ALNIALICVALLATIK). Topologically, residues 34-58 (GMVNIWKSGLIQLLFFLTLAGRSCS) are cytoplasmic. A Zn(2+)-binding site is contributed by Cys-57. Topologically, residues 59 to 453 (HSFTIGRFHE…QGRTPLSLVD (395 aa)) are extracellular. Disulfide bonds link Cys-87–Cys-255, Cys-300–Cys-313, Cys-322–Cys-331, and Cys-385–Cys-406. N-linked (GlcNAc...) asparagine; by host glycans are attached at residues Asn-90, Asn-112, Asn-127, Asn-180, and Asn-248. Asn-386, Asn-394, and Asn-416 each carry an N-linked (GlcNAc...) asparagine; by host glycan. The chain crosses the membrane as a helical span at residues 454–474 (LCFWSTLFYISTLFAHLVGFP). The Cytoplasmic portion of the chain corresponds to 475 to 515 (THRHLIGEGCPKPHRLTGSGICSCGHYGIPGKPVRWTKMSR). Positions 476, 478, 484, 488, 496, and 498 each coordinate Zn(2+).

It belongs to the arenaviridae GPC protein family. In terms of assembly, interacts with glycoprotein G2. Part of the GP complex (GP-C) together with glycoprotein G1 and glycoprotein G2. The GP-complex interacts with protein Z, which interacts with ribonucleocapsid; these interactions may induce virion budding. Homotrimer; disulfide-linked. In pre-fusion state, G1 homotrimers bind G2 homotrimers via ionic interactions. Part of the GP complex (GP-C) together with glycoprotein G2 and the stable signal peptide. The GP-complex interacts with protein Z, which interacts with ribonucleocapsid; these interactions may induce virion budding. As to quaternary structure, homotrimer. Interacts with the stable signal peptide. In pre-fusion state, G2 homotrimers bind G1 homotrimers via ionic interactions. Part of the GP complex (GP-C) together with glycoprotein G1 and the stable signal peptide. Acidification in the endosome triggers rearrangements, which ultimately leads to a 6 helix bundle formed by the two heptad repeat domains (HR1 and HR2) in post-fusion state. The GP-complex interacts with protein Z, which interacts with ribonucleocapsid; these interactions may induce virion budding. Post-translationally, specific enzymatic cleavages in vivo yield mature proteins. GP-C polyprotein is cleaved in the endoplasmic reticulum by the host protease MBTPS1. Only cleaved glycoprotein is incorporated into virions. The SSP remains stably associated with the GP complex following cleavage by signal peptidase and plays crucial roles in the trafficking of GP through the secretory pathway. In terms of processing, myristoylation is necessary for GP2-mediated fusion activity.

It localises to the virion membrane. Its subcellular location is the host endoplasmic reticulum membrane. The protein localises to the host Golgi apparatus membrane. It is found in the host cell membrane. In terms of biological role, functions as a cleaved signal peptide that is retained as the third component of the GP complex (GP-C). Helps to stabilize the spike complex in its native conformation. The SSP is required for efficient glycoprotein expression, post-translational maturation cleavage of G1 and G2, glycoprotein transport to the cell surface plasma membrane, formation of infectious virus particles, and acid pH-dependent glycoprotein-mediated cell fusion. Forms the virion spikes together with glycoprotein G2. The glycoprotein spike trimers are connected to the underlying matrix. Mediates virus attachment to host receptor alpha-dystroglycan DAG1. This attachment induces virion internalization predominantly through clathrin- and caveolin-independent endocytosis. Its function is as follows. Forms the virion spikes together with glycoprotein G1. The glycoprotein spike trimers are connected to the underlying matrix. Class I viral fusion protein that directs fusion of viral and host endosomal membranes, leading to delivery of the nucleocapsid into the cytoplasm. Membrane fusion is mediated by irreversible conformational changes induced by acidification. In Latino mammarenavirus (isolate Rat/Bolivia/MARU 1924/1965) (LATV), this protein is Pre-glycoprotein polyprotein GP complex.